The sequence spans 167 residues: uncharacterized protein (167 aa).

Residues 140-167 form a disordered region; sequence SSEEKKKKKKKKKEKSLHTEREKKKKKF. Basic residues predominate over residues 145-154; that stretch reads KKKKKKKKEK.

This is an uncharacterized protein from Saccharomyces cerevisiae (strain ATCC 204508 / S288c) (Baker's yeast).